The chain runs to 238 residues: Ribonuclease PH (238 aa).

Phosphate is bound by residues Arg86 and 124-126 (GTR).

The protein belongs to the RNase PH family. As to quaternary structure, homohexameric ring arranged as a trimer of dimers.

The catalysed reaction is tRNA(n+1) + phosphate = tRNA(n) + a ribonucleoside 5'-diphosphate. Functionally, phosphorolytic 3'-5' exoribonuclease that plays an important role in tRNA 3'-end maturation. Removes nucleotide residues following the 3'-CCA terminus of tRNAs; can also add nucleotides to the ends of RNA molecules by using nucleoside diphosphates as substrates, but this may not be physiologically important. Probably plays a role in initiation of 16S rRNA degradation (leading to ribosome degradation) during starvation. The sequence is that of Ribonuclease PH from Phenylobacterium zucineum (strain HLK1).